The chain runs to 206 residues: MTFKNKLKFYVITDRKYSCEVYSVEQALKGGATAVQLRMKSSNTREMVEVGQKIRKLTLEYDALFFVNDRLDIAQAVKSDGIHVGIDDISISKIKEIAPELIIGASAYNINEMKIAESEGADYLGVGSVYPTNTKLDARYLGLNGLKELSNCSNLPVVAIGGINHENVKEVLMCGVSGVAVVSAIVGANDIIFSAKKMNEIIKKYI.

4-amino-2-methyl-5-(diphosphooxymethyl)pyrimidine-binding positions include 36–40 (QLRMK) and N68. Residues D69 and D88 each coordinate Mg(2+). S106 is a 4-amino-2-methyl-5-(diphosphooxymethyl)pyrimidine binding site. Residue 132 to 134 (TNT) participates in 2-[(2R,5Z)-2-carboxy-4-methylthiazol-5(2H)-ylidene]ethyl phosphate binding. K135 provides a ligand contact to 4-amino-2-methyl-5-(diphosphooxymethyl)pyrimidine. 2-[(2R,5Z)-2-carboxy-4-methylthiazol-5(2H)-ylidene]ethyl phosphate-binding positions include G162 and 182–183 (VS).

The protein belongs to the thiamine-phosphate synthase family. It depends on Mg(2+) as a cofactor.

The enzyme catalyses 2-[(2R,5Z)-2-carboxy-4-methylthiazol-5(2H)-ylidene]ethyl phosphate + 4-amino-2-methyl-5-(diphosphooxymethyl)pyrimidine + 2 H(+) = thiamine phosphate + CO2 + diphosphate. It carries out the reaction 2-(2-carboxy-4-methylthiazol-5-yl)ethyl phosphate + 4-amino-2-methyl-5-(diphosphooxymethyl)pyrimidine + 2 H(+) = thiamine phosphate + CO2 + diphosphate. It catalyses the reaction 4-methyl-5-(2-phosphooxyethyl)-thiazole + 4-amino-2-methyl-5-(diphosphooxymethyl)pyrimidine + H(+) = thiamine phosphate + diphosphate. Its pathway is cofactor biosynthesis; thiamine diphosphate biosynthesis; thiamine phosphate from 4-amino-2-methyl-5-diphosphomethylpyrimidine and 4-methyl-5-(2-phosphoethyl)-thiazole: step 1/1. Condenses 4-methyl-5-(beta-hydroxyethyl)thiazole monophosphate (THZ-P) and 2-methyl-4-amino-5-hydroxymethyl pyrimidine pyrophosphate (HMP-PP) to form thiamine monophosphate (TMP). The polypeptide is Thiamine-phosphate synthase (Methanococcus vannielii (strain ATCC 35089 / DSM 1224 / JCM 13029 / OCM 148 / SB)).